The primary structure comprises 223 residues: MSQVSPTRMNLLQRRGQLRLAQKGVDLLKKKRDALVAEFFGLVREAMEARKALDQAAKEAYAALLLAQAFDGPEVVAGAALGVPPLEGVEAEVENVWGSKVPRLKATFPDGALLSPVGTPAYTLEASRAFRRYAEALIRVANTETRLKKIGEEIKKTTRRVNALEQVVIPGIRAQIRFIQQVLEQREREDTFRLKRIKGKIEAREAEEEGGRPNPQVEIGAGL.

Residues 203-223 (AREAEEEGGRPNPQVEIGAGL) form a disordered region.

The protein belongs to the V-ATPase D subunit family.

Its function is as follows. Produces ATP from ADP in the presence of a proton gradient across the membrane. In Thermus thermophilus (strain ATCC BAA-163 / DSM 7039 / HB27), this protein is V-type ATP synthase subunit D.